Reading from the N-terminus, the 328-residue chain is Sin3 histone deacetylase corepressor complex component SDS3 (328 aa).

The interval 1 to 64 (MSAAALLAPA…TDLAKHDEED (64 aa)) is disordered. An N-acetylserine modification is found at serine 2. Residues 2-170 (SAAALLAPAP…IENEKLTMEL (169 aa)) are mediates interaction with USP17L2. Residues 10–21 (APAPAGAPPAPE) are compositionally biased toward pro residues. Acidic residues-rich tracts occupy residues 23–37 (YPEE…EDDE) and 45–54 (SDEDTEDASE). Phosphoserine is present on residues serine 32 and serine 45. A Phosphothreonine modification is found at threonine 49. Serine 53 carries the post-translational modification Phosphoserine. Positions 64–171 (DFVEMKEQMY…ENEKLTMELT (108 aa)) form a coiled coil. Residues lysine 69, lysine 178, and lysine 201 each participate in a glycyl lysine isopeptide (Lys-Gly) (interchain with G-Cter in SUMO2) cross-link. Residues 226–252 (LKSPKRPASPSSPEHLPTTPAESPAQR) are disordered. A phosphoserine mark is found at serine 228, serine 234, and serine 237. Residue threonine 244 is modified to Phosphothreonine.

It belongs to the SDS3 family. Homodimer. Component of the SIN3 histone deacetylase (HDAC) corepressor complex. Interacts with SIN3A. Interaction with SIN3B enhances the interaction between SIN3B and HDAC1 to form a complex. Interacts with HCFC1. Component of a mSin3A corepressor complex that contains SIN3A, SAP130, SUDS3/SAP45, ARID4B/SAP180, HDAC1 and HDAC2. Interacts with USP17L2; the interaction is direct. Interacts with FOXK2. Post-translationally, polyubiquitinated. 'Lys-63'-polyubiquitinated SUDS3 positively regulates histone deacetylation. Regulated through deubiquitination by USP17L2/USP17 that cleaves 'Lys-63'-linked ubiquitin chains.

The protein localises to the nucleus. Its function is as follows. Regulatory protein which represses transcription and augments histone deacetylase activity of HDAC1. May have a potential role in tumor suppressor pathways through regulation of apoptosis. May function in the assembly and/or enzymatic activity of the mSin3A corepressor complex or in mediating interactions between the complex and other regulatory complexes. The protein is Sin3 histone deacetylase corepressor complex component SDS3 (SUDS3) of Bos taurus (Bovine).